We begin with the raw amino-acid sequence, 150 residues long: MQIILLEKIGGLGNLGDIVTVKNGYARNFLIPAGKAKRATEANMKEFEVRRAELEAKQAEILADARVRQEKLDGQTVTVAQKAGVDGRLFGSVTNADIAAAIVAAGIEAVKANVRLPNGPLKAVGEYEVEVALHTDAVAKITVAVVAATE.

Belongs to the bacterial ribosomal protein bL9 family.

Its function is as follows. Binds to the 23S rRNA. In Neisseria meningitidis serogroup C / serotype 2a (strain ATCC 700532 / DSM 15464 / FAM18), this protein is Large ribosomal subunit protein bL9.